Reading from the N-terminus, the 472-residue chain is Cysteine--tRNA ligase (472 aa).

Position 29 (Cys29) interacts with Zn(2+). The 'HIGH' region motif lies at 31–41 (PTVYNYIHIGN). Zn(2+) is bound by residues Cys214, His239, and Glu243. The short motif at 273–277 (KMSKS) is the 'KMSKS' region element. Position 276 (Lys276) interacts with ATP.

Belongs to the class-I aminoacyl-tRNA synthetase family. In terms of assembly, monomer. Requires Zn(2+) as cofactor.

Its subcellular location is the cytoplasm. It catalyses the reaction tRNA(Cys) + L-cysteine + ATP = L-cysteinyl-tRNA(Cys) + AMP + diphosphate. The polypeptide is Cysteine--tRNA ligase (Lactobacillus gasseri (strain ATCC 33323 / DSM 20243 / BCRC 14619 / CIP 102991 / JCM 1131 / KCTC 3163 / NCIMB 11718 / NCTC 13722 / AM63)).